We begin with the raw amino-acid sequence, 159 residues long: Nascent polypeptide-associated complex subunit beta (159 aa).

2 disordered regions span residues 1–39 and 124–159; these read MDME…GMDD and QSMQ…DKVE. Basic residues predominate over residues 23–32; it reads TPRRKVKNVH. The 66-residue stretch at 36–101 folds into the NAC-A/B domain; the sequence is GMDDKKLQTS…GEDKELTELV (66 aa). The span at 136-153 shows a compositional bias: acidic residues; sequence KDDEEDDDDIPDLVEGEN.

This sequence belongs to the NAC-beta family. In terms of assembly, part of the nascent polypeptide-associated complex (NAC), consisting of EGD2 and EGD1. NAC associates with ribosomes via EGD1.

Its subcellular location is the cytoplasm. The protein resides in the nucleus. Its function is as follows. Component of the nascent polypeptide-associated complex (NAC), a dynamic component of the ribosomal exit tunnel, protecting the emerging polypeptides from interaction with other cytoplasmic proteins to ensure appropriate nascent protein targeting. The NAC complex also promotes mitochondrial protein import by enhancing productive ribosome interactions with the outer mitochondrial membrane and blocks the inappropriate interaction of ribosomes translating non-secretory nascent polypeptides with translocation sites in the membrane of the endoplasmic reticulum. EGD1 may act as a transcription factor that exert a negative effect on the expression of several genes that are transcribed by RNA polymerase II. The chain is Nascent polypeptide-associated complex subunit beta (egd1) from Sclerotinia sclerotiorum (strain ATCC 18683 / 1980 / Ss-1) (White mold).